The following is a 281-amino-acid chain: Undecaprenyl-diphosphatase 1 (281 aa).

A run of 6 helical transmembrane segments spans residues 95 to 115, 119 to 139, 152 to 172, 195 to 215, 227 to 247, and 256 to 276; these read WMVIAGTIPVGLAGVLLKDLI, FRNLWITATVLILFSLVFILA, LTMKDAVLMGLWQCLALIPGV, FSFLLAIPAVLASGLFSLPDA, LQLLVGSGIGFVVGYISIAWL, and FAWFAAYRIPLGLLVMALLGT.

Belongs to the UppP family.

It is found in the cell membrane. The catalysed reaction is di-trans,octa-cis-undecaprenyl diphosphate + H2O = di-trans,octa-cis-undecaprenyl phosphate + phosphate + H(+). In terms of biological role, catalyzes the dephosphorylation of undecaprenyl diphosphate (UPP). Confers resistance to bacitracin. This chain is Undecaprenyl-diphosphatase 1, found in Corynebacterium jeikeium (strain K411).